Consider the following 326-residue polypeptide: Toluene-4-monooxygenase system, ferredoxin--NAD(+) reductase component (326 aa).

The region spanning Met1–Ala92 is the 2Fe-2S ferredoxin-type domain. 4 residues coordinate [2Fe-2S] cluster: Cys36, Cys41, Cys44, and Cys76. The segment at Arg95–Phe326 is ferredoxin-reductase. In terms of domain architecture, FAD-binding FR-type spans Pro100–Lys195. Residues Arg146–Ser149, Ile162–Lys164, and Lys170–Ser172 contribute to the FAD site.

Belongs to the bacterial ring-hydroxylating dioxygenase ferredoxin reductase family. As to quaternary structure, monomer. The alkene monooxygenase multicomponent enzyme system is composed of an electron transfer component and a monooxygenase component interacting with the effector protein TmoD. The electron transfer component is composed of a ferredoxin reductase (TmoF) and a ferredoxin (TmoC), and the monooxygenase component is formed by a heterohexamer (dimer of heterotrimers) of two alpha subunits (TmoA), two beta subunits (TmoE) and two gamma subunits (TmoB). The cofactor is FAD. [2Fe-2S] cluster is required as a cofactor.

The catalysed reaction is 2 reduced [2Fe-2S]-[ferredoxin] + NAD(+) + H(+) = 2 oxidized [2Fe-2S]-[ferredoxin] + NADH. The protein operates within xenobiotic degradation; toluene degradation. In terms of biological role, reductase component of the toluene-4-monooxygenase multicomponent enzyme system which catalyzes the O2- and NADH-dependent hydroxylation of toluene to form p-cresol. Ferredoxin reductase catalyzes the transfer of electrons from NADH to ferredoxin (TmoC). This is Toluene-4-monooxygenase system, ferredoxin--NAD(+) reductase component from Ectopseudomonas mendocina (Pseudomonas mendocina).